Reading from the N-terminus, the 495-residue chain is Monoamine oxidase N (495 aa).

Positions 1 to 19 (MTSRDGYQWTPETGLTQGV) are enriched in polar residues. Residues 1–23 (MTSRDGYQWTPETGLTQGVPSLG) are disordered. A Microbody targeting signal motif is present at residues 493–495 (ARL).

This sequence belongs to the flavin monoamine oxidase family. FAD serves as cofactor.

Its subcellular location is the peroxisome. It catalyses the reaction a secondary aliphatic amine + O2 + H2O = a primary amine + an aldehyde + H2O2. This chain is Monoamine oxidase N (maoN), found in Aspergillus niger.